We begin with the raw amino-acid sequence, 337 residues long: Dihydroorotate dehydrogenase (quinone) (337 aa).

Residues 61–65 (AGLDK) and T85 contribute to the FMN site. K65 is a substrate binding site. Residue 110–114 (NRMGF) coordinates substrate. N138 and N171 together coordinate FMN. A substrate-binding site is contributed by N171. The active-site Nucleophile is S174. N176 lines the substrate pocket. 2 residues coordinate FMN: K216 and T244. 245-246 (NT) lines the substrate pocket. FMN contacts are provided by residues G267, G296, and 317 to 318 (YS).

This sequence belongs to the dihydroorotate dehydrogenase family. Type 2 subfamily. As to quaternary structure, monomer. Requires FMN as cofactor.

The protein resides in the cell membrane. It catalyses the reaction (S)-dihydroorotate + a quinone = orotate + a quinol. The protein operates within pyrimidine metabolism; UMP biosynthesis via de novo pathway; orotate from (S)-dihydroorotate (quinone route): step 1/1. Its function is as follows. Catalyzes the conversion of dihydroorotate to orotate with quinone as electron acceptor. The chain is Dihydroorotate dehydrogenase (quinone) from Thiobacillus denitrificans (strain ATCC 25259 / T1).